A 989-amino-acid chain; its full sequence is MASNNVAQFAAELKMPAGVLLEQLQAAGVTKASEDDSLSETDKARLLDHLRKSHGSTDADKRKITLTKRHTSEIKQSDATGKARTIQVEVRKKRTFVRRDETSAENGDASNHVAEAEVDDLELQRREEEARHEAELLEKQAQELKARQEQLEREEAERQAREAAAEVERRRAEEEAAKKRAAAAAEAAAREQQTQASKPAQAAQPAAAKAEPVAAKAAEPVVARQSEQDDERAAAERAAQREAAKKAEDAARQAAEKARAEQEEIAKRRAAAEAEARAIREMMNTPRKAQVKAPEPAPKPAEPAKAAEAKGTLHKPARPAGEAPARPAAKKPAAAAPAATTTPSAGDKKKPGGGKGGWQDDAAKRRGIKTRGDTSGGVDRGWRGGPKGRGKHQDQNTTFQAPTEPIVREVHVPETITVADLAHKMAVKASEVIKSMMKLGQMVTINQMLDQETAMIIVEELGHHAVAAKLDDPEAMLVEGEVSDAESLPRPPVVTVMGHVDHGKTSLLDYIRRAKVAAGEAGGITQHIGAYHVETPRGVITFLDTPGHEAFTAMRARGAKATDIVILVVAADDGVMPQTKEAIAHAKAGGVPLVVAINKIDKPDANPERVKQELVAEGVVPEEYGGDSPFVSVSAKTGAGIDDLLENVLLQAEVLELKAPVEAPAKGLVIEAKLDKGKGPVATILVQSGTLNRGDVVLAGSAYGRVRAMLDETGKPTKSAGPSIPVEIQGLSEVPQAGEEVIVMPDERKAREVALFRQGKFRDVKLAKQQAAKLENMLEQMGEGEVQYMPLIVKADVQGSQEALVQSLLKLSTDEVRVQIVHGAVGGISESDVNLATASKAVIIGFNTRADAQARKLAEANGVDIRYYNIIYDAVDDVKAAMSGMLAPEKREVVTGTVEVRQVFKVPKIGAVAGCMVTDGFVKRSSSVRVLRNNVVIFTGELDSLKRFKDDVKEVRQGFECGMSIKNFNDIVEGDQFEVFEVTEVARSL.

Disordered stretches follow at residues 28–60 (GVTKASEDDSLSETDKARLLDHLRKSHGSTDAD) and 97–397 (VRRD…DQNT). 2 stretches are compositionally biased toward basic and acidic residues: residues 40 to 60 (ETDKARLLDHLRKSHGSTDAD) and 122 to 178 (ELQR…EAAK). The span at 182–223 (AAAAEAAAREQQTQASKPAQAAQPAAAKAEPVAAKAAEPVVA) shows a compositional bias: low complexity. The segment covering 231–280 (ERAAAERAAQREAAKKAEDAARQAAEKARAEQEEIAKRRAAAEAEARAIR) has biased composition (basic and acidic residues). Residues 318 to 345 (RPAGEAPARPAAKKPAAAAPAATTTPSA) are compositionally biased toward low complexity. Residues 374 to 387 (TSGGVDRGWRGGPK) are compositionally biased toward gly residues. In terms of domain architecture, tr-type G spans 489-658 (PRPPVVTVMG…LLQAEVLELK (170 aa)). The G1 stretch occupies residues 498 to 505 (GHVDHGKT). Position 498–505 (498–505 (GHVDHGKT)) interacts with GTP. The segment at 523 to 527 (GITQH) is G2. The G3 stretch occupies residues 544–547 (DTPG). GTP-binding positions include 544–548 (DTPGH) and 598–601 (NKID). The interval 598–601 (NKID) is G4. The segment at 634-636 (SAK) is G5.

The protein belongs to the TRAFAC class translation factor GTPase superfamily. Classic translation factor GTPase family. IF-2 subfamily.

It is found in the cytoplasm. One of the essential components for the initiation of protein synthesis. Protects formylmethionyl-tRNA from spontaneous hydrolysis and promotes its binding to the 30S ribosomal subunits. Also involved in the hydrolysis of GTP during the formation of the 70S ribosomal complex. In Paraburkholderia xenovorans (strain LB400), this protein is Translation initiation factor IF-2.